We begin with the raw amino-acid sequence, 304 residues long: Nod factor export ATP-binding protein I (304 aa).

The region spanning 6 to 236 is the ABC transporter domain; it reads IDFQQVEKRY…EIGCDVIEIY (231 aa). 38 to 45 lines the ATP pocket; the sequence is GPNGAGKT.

The protein belongs to the ABC transporter superfamily. Lipooligosaccharide exporter (TC 3.A.1.102) family. As to quaternary structure, the complex is composed of two ATP-binding proteins (NodI) and two transmembrane proteins (NodJ).

Its subcellular location is the cell inner membrane. Part of the ABC transporter complex NodIJ involved in the export of the nodulation factors (Nod factors), the bacterial signal molecules that induce symbiosis and subsequent nodulation induction. Nod factors are LCO (lipo-chitin oligosaccharide), a modified beta-1,4-linked N-acetylglucosamine oligosaccharide. This subunit is responsible for energy coupling to the transport system. This chain is Nod factor export ATP-binding protein I, found in Burkholderia thailandensis (strain ATCC 700388 / DSM 13276 / CCUG 48851 / CIP 106301 / E264).